A 201-amino-acid polypeptide reads, in one-letter code: Small ribosomal subunit protein uS4c (201 aa).

The S4 RNA-binding domain maps to 89–149; it reads MRLDNILFRL…DEQKSRALIQ (61 aa).

Belongs to the universal ribosomal protein uS4 family. As to quaternary structure, part of the 30S ribosomal subunit. Contacts protein S5. The interaction surface between S4 and S5 is involved in control of translational fidelity.

It localises to the plastid. Its subcellular location is the chloroplast. One of the primary rRNA binding proteins, it binds directly to 16S rRNA where it nucleates assembly of the body of the 30S subunit. Functionally, with S5 and S12 plays an important role in translational accuracy. The sequence is that of Small ribosomal subunit protein uS4c (rps4) from Coffea arabica (Arabian coffee).